The following is a 183-amino-acid chain: ATP synthase subunit b, chloroplastic (183 aa).

Residues 20–42 (INTNVFETNIINLAIVVGTLFYY) traverse the membrane as a helical segment.

The protein belongs to the ATPase B chain family. F-type ATPases have 2 components, F(1) - the catalytic core - and F(0) - the membrane proton channel. F(1) has five subunits: alpha(3), beta(3), gamma(1), delta(1), epsilon(1). F(0) has four main subunits: a(1), b(1), b'(1) and c(10-14). The alpha and beta chains form an alternating ring which encloses part of the gamma chain. F(1) is attached to F(0) by a central stalk formed by the gamma and epsilon chains, while a peripheral stalk is formed by the delta, b and b' chains.

Its subcellular location is the plastid. It localises to the chloroplast thylakoid membrane. F(1)F(0) ATP synthase produces ATP from ADP in the presence of a proton or sodium gradient. F-type ATPases consist of two structural domains, F(1) containing the extramembraneous catalytic core and F(0) containing the membrane proton channel, linked together by a central stalk and a peripheral stalk. During catalysis, ATP synthesis in the catalytic domain of F(1) is coupled via a rotary mechanism of the central stalk subunits to proton translocation. In terms of biological role, component of the F(0) channel, it forms part of the peripheral stalk, linking F(1) to F(0). This chain is ATP synthase subunit b, chloroplastic, found in Euglena gracilis.